Reading from the N-terminus, the 1318-residue chain is DNA-directed RNA polymerase subunit beta' (1318 aa).

Zn(2+)-binding residues include cysteine 221, cysteine 295, cysteine 302, and cysteine 305.

The protein belongs to the RNA polymerase beta' chain family. RpoC2 subfamily. In cyanobacteria the RNAP catalytic core is composed of 2 alpha, 1 beta, 1 beta', 1 gamma and 1 omega subunit. When a sigma factor is associated with the core the holoenzyme is formed, which can initiate transcription. Zn(2+) serves as cofactor.

It carries out the reaction RNA(n) + a ribonucleoside 5'-triphosphate = RNA(n+1) + diphosphate. DNA-dependent RNA polymerase catalyzes the transcription of DNA into RNA using the four ribonucleoside triphosphates as substrates. The polypeptide is DNA-directed RNA polymerase subunit beta' (Synechococcus sp. (strain ATCC 27144 / PCC 6301 / SAUG 1402/1) (Anacystis nidulans)).